The following is a 360-amino-acid chain: Phospho-N-acetylmuramoyl-pentapeptide-transferase (360 aa).

10 helical membrane-spanning segments follow: residues 21 to 41 (YVTFRAILGLMTALVFCLWWG), 74 to 94 (MGGILILAGIFISVLLWGDLG), 97 to 117 (YVWVVLFVLASFGLIGFIDDY), 135 to 155 (ILQSLAAIIIAFYLYASADTV), 168 to 188 (IMPQMGAFFIVLAYFTIVGSS), 199 to 219 (GLAIMPTVMVAAAFALIAYLS), 236 to 256 (AGELVIVCTAIVGAGLGFLWF), 263 to 283 (VFMGDVGSLALGAALGAIAVL), 288 to 308 (ILLVIMGGVFVMETVSVILQV), and 338 to 358 (VIVRFWIISLFLVMLGLATLK).

It belongs to the glycosyltransferase 4 family. MraY subfamily. The cofactor is Mg(2+).

It is found in the cell inner membrane. The enzyme catalyses UDP-N-acetyl-alpha-D-muramoyl-L-alanyl-gamma-D-glutamyl-meso-2,6-diaminopimeloyl-D-alanyl-D-alanine + di-trans,octa-cis-undecaprenyl phosphate = di-trans,octa-cis-undecaprenyl diphospho-N-acetyl-alpha-D-muramoyl-L-alanyl-D-glutamyl-meso-2,6-diaminopimeloyl-D-alanyl-D-alanine + UMP. Its pathway is cell wall biogenesis; peptidoglycan biosynthesis. In terms of biological role, catalyzes the initial step of the lipid cycle reactions in the biosynthesis of the cell wall peptidoglycan: transfers peptidoglycan precursor phospho-MurNAc-pentapeptide from UDP-MurNAc-pentapeptide onto the lipid carrier undecaprenyl phosphate, yielding undecaprenyl-pyrophosphoryl-MurNAc-pentapeptide, known as lipid I. In Shewanella violacea (strain JCM 10179 / CIP 106290 / LMG 19151 / DSS12), this protein is Phospho-N-acetylmuramoyl-pentapeptide-transferase.